The sequence spans 638 residues: MGKIIGIDLGTTNSCVAVLDGGKARVLENAEGDRTTPSIVAYTDEEIIVGQPAKRQAVTNPNNTFFAIKRLIGRRFKDDEVQRDVDIMPFKIIGADNGDAWVEQRGNKMAPPQVSAEILKKMKKTAEDFLGEEVTEAVITVPAYFNDSQRQATKDAGRIAGLEVKRIINEPTAAALAYGIDKKQGDNIVAVYDLGGGTFDISIIEIDSNDGDQTFEVLATNGDTHLGGEDFDNRLINYLADEFKKDQGLDLRRDPLAMQRLKEAAEKAKIELSSTNQTEVNLPYITADASGPKHLVVKVTRTKLESLVEDLIQRTLEPLKVALADADLSVSEINEVILVGGQTRMPKVQEAVTNFFGKEPRKDVNPDEAVAVGAAIQAGVLSGEVKDVLLLDVTPLSLGIETMGSVMTKLIDKNTTIPTKAQQVFSTADDNQSAVTIHVLQGERKQASANKSLGQFNLEGIEPAPRGQPQVEVMFDIDADGILHVSATDKKTGKKQNITIKASSGLSDEEVEQMVRDAEAHADEDAKFEALVQARNQADGLVHATKKQVTEAGDALASDEKEKIEAAMAAVDEATKGKDAEAIEKATQALIEASAKLMEIAQAKSQAQGGEEAQAKDAGQSNDDVVDAEFEEVKDDKK.

T198 carries the post-translational modification Phosphothreonine; by autocatalysis. A disordered region spans residues 602-638 (QAKSQAQGGEEAQAKDAGQSNDDVVDAEFEEVKDDKK). Residues 624-638 (DVVDAEFEEVKDDKK) are compositionally biased toward acidic residues.

This sequence belongs to the heat shock protein 70 family.

In terms of biological role, acts as a chaperone. This Shewanella denitrificans (strain OS217 / ATCC BAA-1090 / DSM 15013) protein is Chaperone protein DnaK.